Reading from the N-terminus, the 316-residue chain is Ribose-phosphate pyrophosphokinase (316 aa).

ATP contacts are provided by residues 42-44 and 101-102; these read DGE and RQ. Mg(2+)-binding residues include histidine 135 and aspartate 174. Lysine 197 is a catalytic residue. D-ribose 5-phosphate is bound by residues arginine 199, aspartate 223, and 227 to 231; that span reads DTAGT.

Belongs to the ribose-phosphate pyrophosphokinase family. Class I subfamily. In terms of assembly, homohexamer. It depends on Mg(2+) as a cofactor.

Its subcellular location is the cytoplasm. It catalyses the reaction D-ribose 5-phosphate + ATP = 5-phospho-alpha-D-ribose 1-diphosphate + AMP + H(+). The protein operates within metabolic intermediate biosynthesis; 5-phospho-alpha-D-ribose 1-diphosphate biosynthesis; 5-phospho-alpha-D-ribose 1-diphosphate from D-ribose 5-phosphate (route I): step 1/1. In terms of biological role, involved in the biosynthesis of the central metabolite phospho-alpha-D-ribosyl-1-pyrophosphate (PRPP) via the transfer of pyrophosphoryl group from ATP to 1-hydroxyl of ribose-5-phosphate (Rib-5-P). This chain is Ribose-phosphate pyrophosphokinase, found in Halalkalibacterium halodurans (strain ATCC BAA-125 / DSM 18197 / FERM 7344 / JCM 9153 / C-125) (Bacillus halodurans).